Reading from the N-terminus, the 76-residue chain is Kappa-actitoxin-Avd4m (76 aa).

An N-terminal signal peptide occupies residues 1–19 (MNKALFLCLVVLCAAVVFA). The propeptide occupies 20–31 (AEDLQKAKHAPF). 3 disulfide bridges follow: Cys-37/Cys-72, Cys-39/Cys-65, and Cys-55/Cys-73.

Belongs to the sea anemone type 3 (BDS) potassium channel toxin family. In terms of tissue distribution, weakly expressed in the ectodermal tissue from the distal and proximal tentacles, body wall, and oral disk.

The protein localises to the secreted. Its subcellular location is the nematocyst. Functionally, blocks Kv3 voltage-gated potassium channels. Reduces blood pressure. The polypeptide is Kappa-actitoxin-Avd4m (Anemonia viridis (Snakelocks anemone)).